The following is a 192-amino-acid chain: Ribosome hibernation promotion factor (192 aa).

Residues R95 to T129 are disordered. Positions N120–T129 are enriched in acidic residues.

The protein belongs to the HPF/YfiA ribosome-associated protein family. Long HPF subfamily. In terms of assembly, interacts with 100S ribosomes.

It is found in the cytoplasm. Functionally, required for dimerization of active 70S ribosomes into 100S ribosomes in stationary phase; 100S ribosomes are translationally inactive and sometimes present during exponential growth. The protein is Ribosome hibernation promotion factor of Staphylococcus haemolyticus (strain JCSC1435).